Reading from the N-terminus, the 280-residue chain is Putative pyruvate, phosphate dikinase regulatory protein (280 aa).

ADP is bound at residue 156–163 (GVSRTSKT).

It belongs to the pyruvate, phosphate/water dikinase regulatory protein family. PDRP subfamily.

It catalyses the reaction N(tele)-phospho-L-histidyl/L-threonyl-[pyruvate, phosphate dikinase] + ADP = N(tele)-phospho-L-histidyl/O-phospho-L-threonyl-[pyruvate, phosphate dikinase] + AMP + H(+). The enzyme catalyses N(tele)-phospho-L-histidyl/O-phospho-L-threonyl-[pyruvate, phosphate dikinase] + phosphate + H(+) = N(tele)-phospho-L-histidyl/L-threonyl-[pyruvate, phosphate dikinase] + diphosphate. Functionally, bifunctional serine/threonine kinase and phosphorylase involved in the regulation of the pyruvate, phosphate dikinase (PPDK) by catalyzing its phosphorylation/dephosphorylation. The protein is Putative pyruvate, phosphate dikinase regulatory protein of Hyphomonas neptunium (strain ATCC 15444).